The following is a 222-amino-acid chain: MSPSAGLQFSLYFLQTKKVLWKLTDKEKGLCYILLFTLCFFADQENGGKALASPPGIWKRADVTFDSNTAFSSLVVSANKKTVKNVGVPQVVPDNPERFNSSPCVLGSPGFRSGKHYFEVKYGTQREWAVGIAGKSVKRKGNLMLVPEERIWQMGLWWLRHLETDPGRVHSTSGKITVFVDYNGGNVIFDLNRINTTLKANFNGEEVVPFFYLGGTVSLTTL.

The signal sequence occupies residues 1–44; the sequence is MSPSAGLQFSLYFLQTKKVLWKLTDKEKGLCYILLFTLCFFADQ. A propeptide spanning residues 45-52 is cleaved from the precursor; sequence ENGGKALA. Positions 53–159 constitute a B30.2/SPRY domain; that stretch reads SPPGIWKRAD…RIWQMGLWWL (107 aa). A propeptide spanning residues 160-222 is cleaved from the precursor; that stretch reads RHLETDPGRV…LGGTVSLTTL (63 aa). N195 carries an N-linked (GlcNAc...) asparagine glycan.

The protein belongs to the ohanin/vespryn family. As to expression, expressed by the venom gland.

The protein resides in the secreted. In terms of biological role, neurotoxin that produces dose-dependent hypolocomotion and hyperalgesia in mice. May directly act on the central nervous system, as it is 6500-fold more potent when administered intracerebroventricularly than intraperitoneal. This chain is Vespryn, found in Crotalus adamanteus (Eastern diamondback rattlesnake).